The following is a 286-amino-acid chain: Phosphatidylserine decarboxylase proenzyme (286 aa).

Active-site charge relay system; for autoendoproteolytic cleavage activity residues include Asp-90, His-147, and Ser-252. Ser-252 (schiff-base intermediate with substrate; via pyruvic acid; for decarboxylase activity) is an active-site residue. Ser-252 carries the pyruvic acid (Ser); by autocatalysis modification.

Belongs to the phosphatidylserine decarboxylase family. PSD-B subfamily. Prokaryotic type I sub-subfamily. As to quaternary structure, heterodimer of a large membrane-associated beta subunit and a small pyruvoyl-containing alpha subunit. Pyruvate is required as a cofactor. Is synthesized initially as an inactive proenzyme. Formation of the active enzyme involves a self-maturation process in which the active site pyruvoyl group is generated from an internal serine residue via an autocatalytic post-translational modification. Two non-identical subunits are generated from the proenzyme in this reaction, and the pyruvate is formed at the N-terminus of the alpha chain, which is derived from the carboxyl end of the proenzyme. The autoendoproteolytic cleavage occurs by a canonical serine protease mechanism, in which the side chain hydroxyl group of the serine supplies its oxygen atom to form the C-terminus of the beta chain, while the remainder of the serine residue undergoes an oxidative deamination to produce ammonia and the pyruvoyl prosthetic group on the alpha chain. During this reaction, the Ser that is part of the protease active site of the proenzyme becomes the pyruvoyl prosthetic group, which constitutes an essential element of the active site of the mature decarboxylase.

The protein localises to the cell membrane. It catalyses the reaction a 1,2-diacyl-sn-glycero-3-phospho-L-serine + H(+) = a 1,2-diacyl-sn-glycero-3-phosphoethanolamine + CO2. It participates in phospholipid metabolism; phosphatidylethanolamine biosynthesis; phosphatidylethanolamine from CDP-diacylglycerol: step 2/2. Functionally, catalyzes the formation of phosphatidylethanolamine (PtdEtn) from phosphatidylserine (PtdSer). The chain is Phosphatidylserine decarboxylase proenzyme from Azotobacter vinelandii (strain DJ / ATCC BAA-1303).